A 494-amino-acid chain; its full sequence is Glutamate--tRNA ligase (494 aa).

Residues proline 10–threonine 20 carry the 'HIGH' region motif. 4 residues coordinate Zn(2+): cysteine 107, cysteine 109, cysteine 134, and histidine 136. Residues lysine 251–arginine 255 carry the 'KMSKS' region motif. Lysine 254 serves as a coordination point for ATP.

Belongs to the class-I aminoacyl-tRNA synthetase family. Glutamate--tRNA ligase type 1 subfamily. In terms of assembly, monomer. It depends on Zn(2+) as a cofactor.

The protein resides in the cytoplasm. It catalyses the reaction tRNA(Glu) + L-glutamate + ATP = L-glutamyl-tRNA(Glu) + AMP + diphosphate. Functionally, catalyzes the attachment of glutamate to tRNA(Glu) in a two-step reaction: glutamate is first activated by ATP to form Glu-AMP and then transferred to the acceptor end of tRNA(Glu). The chain is Glutamate--tRNA ligase from Pseudomonas aeruginosa (strain ATCC 15692 / DSM 22644 / CIP 104116 / JCM 14847 / LMG 12228 / 1C / PRS 101 / PAO1).